Consider the following 51-residue polypeptide: Micropeptide inhibiting actin cytoskeleton (51 aa).

Residues 1 to 22 form a disordered region; the sequence is MERAGVPGFSPRRSSVEAKMQS.

As to quaternary structure, interacts with aquaporin AQP2.

Functionally, reduces filamentous actin fibers by interacting with aquaporin AQP2 which leads to inhibition of the expression of SEPTIN4 and integrin ITGB4. Also inhibits the activation of the EREG/EGFR signaling pathway through interaction with AQP2. This chain is Micropeptide inhibiting actin cytoskeleton, found in Homo sapiens (Human).